We begin with the raw amino-acid sequence, 632 residues long: Phosphomethylpyrimidine synthase (632 aa).

The segment covering 1-23 (MNIRSNPQQTVPAVTTGPLSSSR) has biased composition (polar residues). Positions 1-26 (MNIRSNPQQTVPAVTTGPLSSSRKIF) are disordered. Substrate is bound by residues N221, M250, Y279, H315, 335 to 337 (SRG), 376 to 379 (DGLR), and E415. Zn(2+) is bound at residue H419. Y442 is a substrate binding site. H483 is a Zn(2+) binding site. [4Fe-4S] cluster contacts are provided by C563, C566, and C571.

The protein belongs to the ThiC family. In terms of assembly, homodimer. It depends on [4Fe-4S] cluster as a cofactor.

It catalyses the reaction 5-amino-1-(5-phospho-beta-D-ribosyl)imidazole + S-adenosyl-L-methionine = 4-amino-2-methyl-5-(phosphooxymethyl)pyrimidine + CO + 5'-deoxyadenosine + formate + L-methionine + 3 H(+). It functions in the pathway cofactor biosynthesis; thiamine diphosphate biosynthesis. In terms of biological role, catalyzes the synthesis of the hydroxymethylpyrimidine phosphate (HMP-P) moiety of thiamine from aminoimidazole ribotide (AIR) in a radical S-adenosyl-L-methionine (SAM)-dependent reaction. This chain is Phosphomethylpyrimidine synthase, found in Bradyrhizobium diazoefficiens (strain JCM 10833 / BCRC 13528 / IAM 13628 / NBRC 14792 / USDA 110).